A 271-amino-acid chain; its full sequence is Replication-associated protein A (271 aa).

The region spanning 11 to 114 is the CRESS-DNA virus Rep endonuclease domain; the sequence is LHRNANTFLT…PLAVFERGTF (104 aa). The RCR-1 signature appears at 18-21; sequence FLTY. 3 residues coordinate a divalent metal cation: Glu52, His60, and His62. The short motif at 60-62 is the RCR-2 element; sequence HLH. The For DNA cleavage activity role is filled by Tyr100. Positions 100–103 match the RCR-3 motif; sequence YILK. Glu104 is an a divalent metal cation binding site. The segment at 174-186 is oligomerization; the sequence is SANKLFPDIQEEF. Residues 197 to 201 are binding to RBR1; that stretch reads LLCNE. The segment at 220–229 is transactivation; it reads MLLQPTCYTV. Residues 244 to 264 are compositionally biased toward polar residues; that stretch reads SQQMKDQESRASTSSVQQGQG. Residues 244 to 271 are disordered; it reads SQQMKDQESRASTSSVQQGQGNLLGPEV.

Belongs to the geminiviridae Rep protein family. In terms of assembly, homooligomer. Interacts with host retinoblastoma-related protein 1 (RBR1), and may thereby deregulate the host cell cycle. Part of the C- and V-complexes which are RepA-Rep-DNA complexes involved in the c-sense and v-sense transcription. Mg(2+) serves as cofactor. Mn(2+) is required as a cofactor.

It is found in the host nucleus. The protein localises to the host cytoplasm. Functionally, implicated in enhancement of V-sense gene expression. Acts a an inhibitor of C-sense gene transcription. This chain is Replication-associated protein A, found in Avena sativa (Oat).